Here is a 433-residue protein sequence, read N- to C-terminus: Enolase (433 aa).

Position 167 (Q167) interacts with (2R)-2-phosphoglycerate. E209 acts as the Proton donor in catalysis. D246, E291, and D318 together coordinate Mg(2+). (2R)-2-phosphoglycerate is bound by residues K343, R372, S373, and K394. K343 acts as the Proton acceptor in catalysis.

Belongs to the enolase family. Component of the RNA degradosome, a multiprotein complex involved in RNA processing and mRNA degradation. The cofactor is Mg(2+).

The protein localises to the cytoplasm. Its subcellular location is the secreted. The protein resides in the cell surface. It carries out the reaction (2R)-2-phosphoglycerate = phosphoenolpyruvate + H2O. It functions in the pathway carbohydrate degradation; glycolysis; pyruvate from D-glyceraldehyde 3-phosphate: step 4/5. Its function is as follows. Catalyzes the reversible conversion of 2-phosphoglycerate (2-PG) into phosphoenolpyruvate (PEP). It is essential for the degradation of carbohydrates via glycolysis. In Vibrio vulnificus (strain CMCP6), this protein is Enolase.